The following is a 371-amino-acid chain: Aminomethyltransferase (371 aa).

This sequence belongs to the GcvT family. In terms of assembly, the glycine cleavage system is composed of four proteins: P, T, L and H.

It carries out the reaction N(6)-[(R)-S(8)-aminomethyldihydrolipoyl]-L-lysyl-[protein] + (6S)-5,6,7,8-tetrahydrofolate = N(6)-[(R)-dihydrolipoyl]-L-lysyl-[protein] + (6R)-5,10-methylene-5,6,7,8-tetrahydrofolate + NH4(+). The glycine cleavage system catalyzes the degradation of glycine. The sequence is that of Aminomethyltransferase from Pectobacterium carotovorum subsp. carotovorum (strain PC1).